A 368-amino-acid chain; its full sequence is DNA replication and repair protein RecF (368 aa).

30–37 (GDNGAGKT) serves as a coordination point for ATP.

It belongs to the RecF family.

It localises to the cytoplasm. In terms of biological role, the RecF protein is involved in DNA metabolism; it is required for DNA replication and normal SOS inducibility. RecF binds preferentially to single-stranded, linear DNA. It also seems to bind ATP. The chain is DNA replication and repair protein RecF from Xanthomonas axonopodis pv. citri (strain 306).